The sequence spans 285 residues: UPF0354 protein SACOL1793 (285 aa).

The protein belongs to the UPF0354 family.

This is UPF0354 protein SACOL1793 from Staphylococcus aureus (strain COL).